We begin with the raw amino-acid sequence, 338 residues long: Glycerol-3-phosphate dehydrogenase [NAD(P)+] (338 aa).

Positions 20 and 110 each coordinate NADPH. Residues Lys-110, Gly-141, and Ser-143 each coordinate sn-glycerol 3-phosphate. Residue Ala-145 participates in NADPH binding. Sn-glycerol 3-phosphate is bound by residues Lys-197, Asp-250, Ser-260, Arg-261, and Asn-262. The active-site Proton acceptor is Lys-197. Arg-261 serves as a coordination point for NADPH. Residue Glu-287 coordinates NADPH.

The protein belongs to the NAD-dependent glycerol-3-phosphate dehydrogenase family.

Its subcellular location is the cytoplasm. The enzyme catalyses sn-glycerol 3-phosphate + NAD(+) = dihydroxyacetone phosphate + NADH + H(+). The catalysed reaction is sn-glycerol 3-phosphate + NADP(+) = dihydroxyacetone phosphate + NADPH + H(+). It participates in membrane lipid metabolism; glycerophospholipid metabolism. Functionally, catalyzes the reduction of the glycolytic intermediate dihydroxyacetone phosphate (DHAP) to sn-glycerol 3-phosphate (G3P), the key precursor for phospholipid synthesis. The chain is Glycerol-3-phosphate dehydrogenase [NAD(P)+] from Aster yellows witches'-broom phytoplasma (strain AYWB).